The following is a 258-amino-acid chain: MKIISAVAASSIALGAVSATTDHVSRMLVLGGAVVPSGTKTYTTGIRPTIDGDNFCGGSLISPTHVLTTTACLRGIKPPNWVSVGTHYLNGTHDGEQIKVVAAQNHTNFNSTSGSFDVALLTLEKPSRFKPVKLPAADDSDIVAGMWSKLVGWGYTGYPEKTKAYELQGVSLQVWDNEQCGQLYPVDDTMVCAGGVKGKDSCDGDTGGPLIKERGPGDEDDIVVGLVSWGSECGVGYPGVYSRVSKALEWINSITKGK.

A signal peptide spans 1-19 (MKIISAVAASSIALGAVSA). The 228-residue stretch at 29–256 (VLGGAVVPSG…ALEWINSITK (228 aa)) folds into the Peptidase S1 domain. C56 and C72 are joined by a disulfide. 3 N-linked (GlcNAc...) asparagine glycosylation sites follow: N90, N105, and N110. 2 disulfides stabilise this stretch: C180–C192 and C202–C233.

The protein belongs to the peptidase S1 family. As to quaternary structure, forms an apoplastic complex with host endoglucanases in tomato leaves during P.infestans infection.

The protein localises to the secreted. Its function is as follows. Secreted effector that suppresses host plant glucan elicitor-mediated defense responses. Targets host endoglucanases and inhibits the endoglucanase-mediated release of elicitor-active glucan oligosaccharides from P.infestans cell walls. This chain is Glucanase inhibitor protein 3, found in Phytophthora infestans (Potato late blight agent).